The primary structure comprises 119 residues: MIEPEFKDGLLPVIVQDYETLEVLMFAYMNREAFDLTCSTGIAHYFSRSRGKLWKKGETSGHYQHVKEMRIDCDRDCLLILVEQDTGACHTGYRSCFYRTIEGDVVGEKTFEPADVYKN.

Residue aspartate 72 participates in Mg(2+) binding. Zn(2+) is bound at residue cysteine 73. Mg(2+)-binding residues include aspartate 74 and aspartate 76. Positions 89 and 96 each coordinate Zn(2+).

The protein belongs to the PRA-CH family. Homodimer. Mg(2+) is required as a cofactor. Zn(2+) serves as cofactor.

Its subcellular location is the cytoplasm. It carries out the reaction 1-(5-phospho-beta-D-ribosyl)-5'-AMP + H2O = 1-(5-phospho-beta-D-ribosyl)-5-[(5-phospho-beta-D-ribosylamino)methylideneamino]imidazole-4-carboxamide. Its pathway is amino-acid biosynthesis; L-histidine biosynthesis; L-histidine from 5-phospho-alpha-D-ribose 1-diphosphate: step 3/9. Its function is as follows. Catalyzes the hydrolysis of the adenine ring of phosphoribosyl-AMP. In Methanocella arvoryzae (strain DSM 22066 / NBRC 105507 / MRE50), this protein is Phosphoribosyl-AMP cyclohydrolase.